Here is a 137-residue protein sequence, read N- to C-terminus: Large ribosomal subunit protein uL16 (137 aa).

Belongs to the universal ribosomal protein uL16 family. In terms of assembly, part of the 50S ribosomal subunit.

In terms of biological role, binds 23S rRNA and is also seen to make contacts with the A and possibly P site tRNAs. This Pseudomonas entomophila (strain L48) protein is Large ribosomal subunit protein uL16.